Consider the following 331-residue polypeptide: MQSFEKEFLKPRSINIEKISEIHSKITLEPLERGFGHTLGNALRRILLSSMPGCAITEVEIEGVLHEYGTKEGVREDVLEILLNLKTLAINMYVKDSIVLTLKKTGIGPVIASDIEYDSSIISIVNPNHIICCITDQDTSIIMRIKVQRGRGYVPAFSRFSSDDQHDLPIGRLLLDACYSPVERISYTVEAARVEKRTDLDKLIIDMETNGTIDPEEAIRRAATILSDQLSSFIDLKDVHQPEVKEEKPEFDPSLLNLVDDLELTVRSANCLKAESIHYIGDLVQKTEVELLKTPNLGKKSLTEIKDVLASRGLSLGMRLDNWPPKHLSEQ.

The alpha N-terminal domain (alpha-NTD) stretch occupies residues 1–237 (MQSFEKEFLK…DQLSSFIDLK (237 aa)). The alpha C-terminal domain (alpha-CTD) stretch occupies residues 251-331 (FDPSLLNLVD…NWPPKHLSEQ (81 aa)).

This sequence belongs to the RNA polymerase alpha chain family. As to quaternary structure, homodimer. The RNAP catalytic core consists of 2 alpha, 1 beta, 1 beta' and 1 omega subunit. When a sigma factor is associated with the core the holoenzyme is formed, which can initiate transcription.

It catalyses the reaction RNA(n) + a ribonucleoside 5'-triphosphate = RNA(n+1) + diphosphate. DNA-dependent RNA polymerase catalyzes the transcription of DNA into RNA using the four ribonucleoside triphosphates as substrates. This is DNA-directed RNA polymerase subunit alpha from Blochmanniella floridana.